Here is a 395-residue protein sequence, read N- to C-terminus: 1-deoxy-D-xylulose 5-phosphate reductoisomerase (395 aa).

NADPH is bound by residues Thr-15, Gly-16, Ser-17, Ile-18, Gly-41, Asn-43, and Asn-126. Lys-127 is a binding site for 1-deoxy-D-xylulose 5-phosphate. An NADPH-binding site is contributed by Glu-128. Asp-152 contributes to the Mn(2+) binding site. Ser-153, Glu-154, Ser-178, and His-201 together coordinate 1-deoxy-D-xylulose 5-phosphate. Glu-154 serves as a coordination point for Mn(2+). Gly-207 serves as a coordination point for NADPH. The 1-deoxy-D-xylulose 5-phosphate site is built by Ser-214, Asn-219, Lys-220, and Glu-223. Glu-223 provides a ligand contact to Mn(2+).

This sequence belongs to the DXR family. Mg(2+) serves as cofactor. Mn(2+) is required as a cofactor.

The catalysed reaction is 2-C-methyl-D-erythritol 4-phosphate + NADP(+) = 1-deoxy-D-xylulose 5-phosphate + NADPH + H(+). The protein operates within isoprenoid biosynthesis; isopentenyl diphosphate biosynthesis via DXP pathway; isopentenyl diphosphate from 1-deoxy-D-xylulose 5-phosphate: step 1/6. Its function is as follows. Catalyzes the NADPH-dependent rearrangement and reduction of 1-deoxy-D-xylulose-5-phosphate (DXP) to 2-C-methyl-D-erythritol 4-phosphate (MEP). In Ruegeria pomeroyi (strain ATCC 700808 / DSM 15171 / DSS-3) (Silicibacter pomeroyi), this protein is 1-deoxy-D-xylulose 5-phosphate reductoisomerase.